We begin with the raw amino-acid sequence, 532 residues long: Putative cysteine ligase BshC (532 aa).

A coiled-coil region spans residues 431–451 (MAQAKDALAKVDASLVEAAER).

This sequence belongs to the BshC family.

This chain is Putative cysteine ligase BshC, found in Koribacter versatilis (strain Ellin345).